The following is a 160-amino-acid chain: Nucleotide-binding protein Noc_2254 (160 aa).

The protein belongs to the YajQ family.

Its function is as follows. Nucleotide-binding protein. The sequence is that of Nucleotide-binding protein Noc_2254 from Nitrosococcus oceani (strain ATCC 19707 / BCRC 17464 / JCM 30415 / NCIMB 11848 / C-107).